A 600-amino-acid polypeptide reads, in one-letter code: MTHVLSAVAWPYANGPRHIGHVAGFGVPSDVFSRYMRMAGHDVLMVSGTDEHGTPILVQAEQEGLTPQQLADRYNRVIAEDLHGLGLSYDLFTRTTTANHYAVVQEMFRTVHRNGYMVARKGMGAISPSTGRTLPDRYVEGTCPICGYDGARGDQCDNCGNQLDAIELKNPRSRINGETPVFVETEHFYLDLPALAEALGSWLQTRADTGRWRPNVLKFSQNLLADMKPRAMTRDIDWGIPVPLEGWEDNPAKRLYVWFDAVIGYLSASVEWARRSGDDDAWKAWWTDPAAESYYFMGKDNITFHSQIWPAELLAYDGRGSAGGQPGPFGNLNLPTEVVASEFLTMEGKQFSSSRGVVIYVRDVLARYQPDALRYFISAAGPENNDSDFTWQEFATRTNSELVAGWGNLVNRTASLIAKNVGEIPAAGELTDADRDLLATTSGGFSTVGGFIEAHRQRAGIGEAMRVVGEVNKYLTEQEPWKIKNSDPERMKSVLHVTAQAVSDCRTLLSPFLPHSAQKVHQAFGGVGTVSPLPELREVTDLDDGRPYPVLTGDYRRGETLPEWASHPVVPGTPVAAPTPVFTKLDVAAVVEEELGRLQR.

Residues 11-21 (PYANGPRHIGH) carry the 'HIGH' region motif. Zn(2+) contacts are provided by cysteine 143, cysteine 146, cysteine 156, and cysteine 159. The short motif at 350-354 (QFSSS) is the 'KMSKS' region element. Serine 353 provides a ligand contact to ATP.

The protein belongs to the class-I aminoacyl-tRNA synthetase family. MetG type 1 subfamily. As to quaternary structure, monomer. Zn(2+) is required as a cofactor.

The protein localises to the cytoplasm. It carries out the reaction tRNA(Met) + L-methionine + ATP = L-methionyl-tRNA(Met) + AMP + diphosphate. In terms of biological role, is required not only for elongation of protein synthesis but also for the initiation of all mRNA translation through initiator tRNA(fMet) aminoacylation. In Kineococcus radiotolerans (strain ATCC BAA-149 / DSM 14245 / SRS30216), this protein is Methionine--tRNA ligase.